The following is a 154-amino-acid chain: Transcriptional repressor NrdR (154 aa).

The tract at residues 1–22 is disordered; that stretch reads MECPNCHKNASRVIDSRPSDEN. A zinc finger lies at 3-34; the sequence is CPNCHKNASRVIDSRPSDENRAIRRRRECENC. Positions 49-139 constitute an ATP-cone domain; sequence LLVIKNDGTR…IYRQFKDVSG (91 aa).

It belongs to the NrdR family. Zn(2+) serves as cofactor.

Functionally, negatively regulates transcription of bacterial ribonucleotide reductase nrd genes and operons by binding to NrdR-boxes. This Lactobacillus gasseri (strain ATCC 33323 / DSM 20243 / BCRC 14619 / CIP 102991 / JCM 1131 / KCTC 3163 / NCIMB 11718 / NCTC 13722 / AM63) protein is Transcriptional repressor NrdR.